The primary structure comprises 673 residues: MSKPFKLNSAFKPSGDQPEAIRRLEEGLEDGLAHQTLLGVTGSGKTFTIANVIADLQRPTMVLAPNKTLAAQLYGEMKEFFPENAVEYFVSYYDYYQPEAYVPSSDTFIEKDASVNEHIEQMRLSATKAMLERRDVVVVASVSAIYGLGDPDLYLKMMLHLTVGMIIDQRAILRRLAELQYTRNDQAFQRGTFRVRGEVIDIFPAESDDIALRVELFDEEVERLSLFDPLTGQIVSTIPRFTIYPKTHYVTPRERIVQAMEEIKEELAARRKVLLENNKLLEEQRLTQRTQFDLEMMNELGYCSGIENYSRFLSGRGPGEPPPTLFDYLPADGLLVVDESHVTIPQIGGMYRGDRARKETLVEYGFRLPSALDNRPLKFEEFEALAPQTIYVSATPGNYELEKSGGDVVDQVVRPTGLLDPIIEVRPVATQVDDLLSEIRQRAAINERVLVTTLTKRMAEDLTEYLEEHGERVRYLHSDIDTVERMEIIRDLRLGEFDVLVGINLLREGLDMPEVSLVAILDADKEGFLRSERSLIQTIGRAARNVNGKAILYGDKITPSMAKAIGETERRREKQQKYNEEHGITPQGLNKKVVDILALGQNIAKTKAKGRGKSRPIVEPDNVPMDMSPKALQQKIHELEGLMMQHAQNLEFEEAAQIRDQLHQLRELFIAAS.

One can recognise a Helicase ATP-binding domain in the interval 26–183; sequence EGLEDGLAHQ…RRLAELQYTR (158 aa). 39–46 lines the ATP pocket; it reads GVTGSGKT. Positions 92 to 115 match the Beta-hairpin motif; it reads YYDYYQPEAYVPSSDTFIEKDASV. The Helicase C-terminal domain maps to 431–597; the sequence is QVDDLLSEIR…GLNKKVVDIL (167 aa). The interval 608–627 is disordered; that stretch reads AKGRGKSRPIVEPDNVPMDM. A UVR domain is found at 633–668; the sequence is QQKIHELEGLMMQHAQNLEFEEAAQIRDQLHQLREL.

The protein belongs to the UvrB family. Forms a heterotetramer with UvrA during the search for lesions. Interacts with UvrC in an incision complex.

Its subcellular location is the cytoplasm. In terms of biological role, the UvrABC repair system catalyzes the recognition and processing of DNA lesions. A damage recognition complex composed of 2 UvrA and 2 UvrB subunits scans DNA for abnormalities. Upon binding of the UvrA(2)B(2) complex to a putative damaged site, the DNA wraps around one UvrB monomer. DNA wrap is dependent on ATP binding by UvrB and probably causes local melting of the DNA helix, facilitating insertion of UvrB beta-hairpin between the DNA strands. Then UvrB probes one DNA strand for the presence of a lesion. If a lesion is found the UvrA subunits dissociate and the UvrB-DNA preincision complex is formed. This complex is subsequently bound by UvrC and the second UvrB is released. If no lesion is found, the DNA wraps around the other UvrB subunit that will check the other stand for damage. This Escherichia fergusonii (strain ATCC 35469 / DSM 13698 / CCUG 18766 / IAM 14443 / JCM 21226 / LMG 7866 / NBRC 102419 / NCTC 12128 / CDC 0568-73) protein is UvrABC system protein B.